The primary structure comprises 423 residues: FAD-dependent monooxygenase asL6 (423 aa).

FAD is bound by residues alanine 10 to alanine 13, glutamate 34 to arginine 35, arginine 108, tyrosine 290, and aspartate 312. Residues glycine 371–isoleucine 391 form a helical membrane-spanning segment.

Belongs to the aromatic-ring hydroxylase family. The cofactor is FAD.

The protein resides in the membrane. Its pathway is secondary metabolite biosynthesis; terpenoid biosynthesis. Its function is as follows. FAD-dependent monooxygenase; part of the gene cluster that mediates the biosynthesis of xenovulene A, an unusual meroterpenoid that has potent inhibitory effects on the human gamma-aminobutyrate A (GABAA) benzodiazepine receptor. The first step of xenovulene A biosynthesis is the biosynthesis of 3-methylorcinaldehyde performed by the non-reducing polyketide synthase aspks1. The salicylate hydroxylase asL1 then catalyzes the oxidative dearomatization of 3-methylorcinaldehyde to yield a dearomatized hydroxycyclohexadione. The 2-oxoglutarate-dependent dioxygenase asL3 further catalyzes the oxidative ring expansion to provide the first tropolone metabolite. The cytochrome P450 monooxygenase asR2 allows the synthesis of tropolone hemiacetal. In parallel, a previously unrecognised class of terpene cyclase, asR6, produces alpha-humulene from farnesylpyrophosphate (FPP). The putative Diels-Alderase asR5 probably catalyzes the formation of the tropolone-humulene skeleton by linking humulene and the polyketide moiety. Oxidative-ring contractions catalyzed by asL4 and asL6 then processively remove carbon atoms from the polyketide to yield xenovulene A. This Sarocladium schorii (Acremonium strictum (strain IMI 501407)) protein is FAD-dependent monooxygenase asL6.